The chain runs to 485 residues: Skb1 localization factor 1 (485 aa).

A sufficient for interaction with Skb1 region spans residues M1–T200. 3 disordered regions span residues N117–N230, E286–S416, and T446–K466. Residues S171–L182 are compositionally biased toward polar residues. The span at R189–P198 shows a compositional bias: basic and acidic residues. Polar residues-rich tracts occupy residues G218–N230 and V341–S363. S222 carries the phosphoserine modification. The segment covering S371–R393 has biased composition (basic and acidic residues). A compositionally biased stretch (polar residues) spans Y394–S416. Basic and acidic residues predominate over residues T447–P464. The segment at K451–D485 is required and sufficient for plasma membrane anchoring; lysine-rich, may bind to anionic lipids in the plasma membrane. S458 carries the post-translational modification Phosphoserine.

In terms of assembly, interacts with Skb1.

The protein localises to the cell membrane. Acts as a membrane anchor for Skb1 in forming plasma membrane microdomains. Promotes mitotic entry by sequestering mitotic inhibitor Skb1 from its regulatory targets Cdr1 and Wee1. In Schizosaccharomyces pombe (strain 972 / ATCC 24843) (Fission yeast), this protein is Skb1 localization factor 1.